Consider the following 410-residue polypeptide: Probable peptidoglycan glycosyltransferase FtsW (410 aa).

A run of 9 helical transmembrane segments spans residues 39–59, 78–98, 108–128, 177–197, 198–218, 221–241, 303–323, 342–362, and 374–394; these read LDPL…VMVY, YFLL…LAAF, FAPW…IPGV, GFLP…GEPD, FGAF…GGIN, VFAL…WLSP, IAEE…AILI, GLVA…NMGV, and LPLM…LAIL.

The protein belongs to the SEDS family. FtsW subfamily.

The protein localises to the cell inner membrane. The catalysed reaction is [GlcNAc-(1-&gt;4)-Mur2Ac(oyl-L-Ala-gamma-D-Glu-L-Lys-D-Ala-D-Ala)](n)-di-trans,octa-cis-undecaprenyl diphosphate + beta-D-GlcNAc-(1-&gt;4)-Mur2Ac(oyl-L-Ala-gamma-D-Glu-L-Lys-D-Ala-D-Ala)-di-trans,octa-cis-undecaprenyl diphosphate = [GlcNAc-(1-&gt;4)-Mur2Ac(oyl-L-Ala-gamma-D-Glu-L-Lys-D-Ala-D-Ala)](n+1)-di-trans,octa-cis-undecaprenyl diphosphate + di-trans,octa-cis-undecaprenyl diphosphate + H(+). It participates in cell wall biogenesis; peptidoglycan biosynthesis. Functionally, peptidoglycan polymerase that is essential for cell division. The polypeptide is Probable peptidoglycan glycosyltransferase FtsW (Aromatoleum aromaticum (strain DSM 19018 / LMG 30748 / EbN1) (Azoarcus sp. (strain EbN1))).